The primary structure comprises 644 residues: Exoribonuclease 2 (644 aa).

In terms of domain architecture, RNB spans 189 to 516; sequence RQDLTALNFV…NHRLLKAVIK (328 aa). Positions 561 to 643 constitute an S1 motif domain; sequence NTRFAAEIID…ETRSIIARPA (83 aa).

Belongs to the RNR ribonuclease family. RNase II subfamily.

It localises to the cytoplasm. It catalyses the reaction Exonucleolytic cleavage in the 3'- to 5'-direction to yield nucleoside 5'-phosphates.. Functionally, involved in mRNA degradation. Hydrolyzes single-stranded polyribonucleotides processively in the 3' to 5' direction. This is Exoribonuclease 2 from Salmonella typhi.